A 442-amino-acid chain; its full sequence is F-box/FBD/LRR-repeat protein At3g14710 (442 aa).

One can recognise an F-box domain in the interval 26-73; the sequence is DKFSSLLESVVSIILSQLPTAEAVSTSVLSKSWKNIWTNITDLHFDDT. LRR repeat units follow at residues 126–147, 151–172, and 173–194; these read NLQR…SLFP, SLVE…AILP, and NLKF…SKNL. The FBD domain occupies 370-414; that stretch reads VESPDCVTTMLKVLQIRNFKPNRLQISVLRYVLDNAEILGSVILS.

The sequence is that of F-box/FBD/LRR-repeat protein At3g14710 from Arabidopsis thaliana (Mouse-ear cress).